We begin with the raw amino-acid sequence, 513 residues long: Xylose import ATP-binding protein XylG (513 aa).

ABC transporter domains are found at residues 5–242 (LEMK…VGRE) and 259–505 (LRIE…LRSE). ATP is bound at residue 37 to 44 (GENGSGKS).

Belongs to the ABC transporter superfamily. Xylose importer (TC 3.A.1.2.4) family. As to quaternary structure, the complex is composed of two ATP-binding proteins (XylG), two transmembrane proteins (XylH) and a solute-binding protein (XylF).

The protein resides in the cell inner membrane. The catalysed reaction is D-xylose(out) + ATP + H2O = D-xylose(in) + ADP + phosphate + H(+). Its function is as follows. Part of the ABC transporter complex XylFGH involved in xylose import. Responsible for energy coupling to the transport system. In Shigella boydii serotype 4 (strain Sb227), this protein is Xylose import ATP-binding protein XylG.